The chain runs to 102 residues: Membrane-bound protein LytA (102 aa).

The first 16 residues, 1–16, serve as a signal peptide directing secretion; sequence MKKFIALLFFILLLSG. Cys-17 is lipidated: N-palmitoyl cysteine. Cys-17 carries the S-diacylglycerol cysteine lipid modification.

The protein localises to the cell membrane. Its function is as follows. Possible role in the secretion of LytB and LytC. The protein is Membrane-bound protein LytA (lytA) of Bacillus subtilis (strain 168).